A 378-amino-acid polypeptide reads, in one-letter code: UPF0754 membrane protein BcerKBAB4_0766 (378 aa).

2 helical membrane-spanning segments follow: residues 1–21 and 357–377; these read MNIWLNMLITTGLGAIIGGYT and YLGALLGGTIGFIQGLLLLFL.

This sequence belongs to the UPF0754 family.

The protein resides in the cell membrane. This chain is UPF0754 membrane protein BcerKBAB4_0766, found in Bacillus mycoides (strain KBAB4) (Bacillus weihenstephanensis).